We begin with the raw amino-acid sequence, 439 residues long: Damage-control phosphatase ARMT1 (439 aa).

At Ala-2 the chain carries N-acetylalanine. Ser-4 bears the Phosphoserine mark. Lys-40 is subject to N6-acetyllysine. Residues Asp-251 and Asn-252 each contribute to the Mn(2+) site. Residue 251-252 participates in substrate binding; the sequence is DN. S-adenosyl-L-methionine is bound by residues Glu-256 and Asp-289. Residue Asp-289 coordinates Mn(2+). Substrate is bound by residues 365 to 369 and Lys-402; that span reads DLNYR. Positions 399–402 match the Subfamily III RTxK motif motif; sequence RTLK.

The protein belongs to the damage-control phosphatase family. Sugar phosphate phosphatase III subfamily. Mn(2+) serves as cofactor. Requires Ni(2+) as cofactor. Post-translationally, automethylated.

The enzyme catalyses beta-D-fructose 1-phosphate + H2O = D-fructose + phosphate. The catalysed reaction is beta-D-fructose 6-phosphate = dihydroxyacetone + D-glyceraldehyde 3-phosphate. It carries out the reaction L-glutamyl-[protein] + S-adenosyl-L-methionine = [protein]-L-glutamate 5-O-methyl ester + S-adenosyl-L-homocysteine. In terms of biological role, metal-dependent phosphatase that shows phosphatase activity against several substrates, including fructose-1-phosphate and fructose-6-phosphate. Its preference for fructose-1-phosphate, a strong glycating agent that causes DNA damage rather than a canonical yeast metabolite, suggests a damage-control function in hexose phosphate metabolism. Has also been shown to have O-methyltransferase activity that methylates glutamate residues of target proteins to form gamma-glutamyl methyl ester residues. Possibly methylates PCNA, suggesting it is involved in the DNA damage response. This is Damage-control phosphatase ARMT1 from Rattus norvegicus (Rat).